We begin with the raw amino-acid sequence, 240 residues long: Transmembrane emp24 domain-containing protein 6 (240 aa).

The signal sequence occupies residues 1–21 (MFPLLFVAGLVVLNLVSSARS). Residues 22-200 (QKTEPLSGTG…FFLLQSNYNY (179 aa)) lie on the Lumenal side of the membrane. A GOLD domain is found at 53–138 (TECFWQFAHQ…SVQVYLNFGV (86 aa)). 2 N-linked (GlcNAc...) asparagine glycosylation sites follow: N107 and N156. The chain crosses the membrane as a helical span at residues 201–223 (VNWWSTAQSLVIVLSGILQLYFL). Topologically, residues 224 to 240 (KRLFNTPMTTETQKPRC) are cytoplasmic.

It belongs to the EMP24/GP25L family.

The protein localises to the endoplasmic reticulum membrane. This is Transmembrane emp24 domain-containing protein 6 (TMED6) from Bos taurus (Bovine).